The primary structure comprises 94 residues: Protein S100-A1 (94 aa).

EF-hand domains lie at isoleucine 13 to alanine 48 and lysine 50 to alanine 85. Ca(2+) contacts are provided by lysine 28, glutamate 33, aspartate 63, asparagine 65, aspartate 67, glutamate 69, and glutamate 74. Cysteine 86 is subject to S-nitrosocysteine.

Belongs to the S-100 family. Dimer of either two alpha chains, or two beta chains, or one alpha and one beta chain. Also forms heterodimers with S100P. Interacts with AGER. Interacts with CAPZA1. Interacts with FKBP4. Interacts with RYR1 and RYR2. Interacts with CACYBP in a calcium-dependent manner. Interacts with PPP5C (via TPR repeats); the interaction is calcium-dependent and modulates PPP5C activity. Interacts with ATP2A2 and PLN in a Ca(2+)-dependent manner. Interacts with mitochondrial F1-ATPase subunits ATP5F1A and ATP5F1B; these interactions increase F1-ATPase activity. In terms of processing, glutathionylated; glutathionylation increases affinity to calcium about 10-fold. Highly prevalent in heart. Also found in lesser quantities in skeletal muscle and brain.

Its subcellular location is the cytoplasm. It is found in the sarcoplasmic reticulum. The protein localises to the mitochondrion. Small calcium binding protein that plays important roles in several biological processes such as Ca(2+) homeostasis, chondrocyte biology and cardiomyocyte regulation. In response to an increase in intracellular Ca(2+) levels, binds calcium which triggers conformational changes. These changes allow interactions with specific target proteins and modulate their activity. Regulates a network in cardiomyocytes controlling sarcoplasmic reticulum Ca(2+) cycling and mitochondrial function through interaction with the ryanodine receptors RYR1 and RYR2, sarcoplasmic reticulum Ca(2+)-ATPase/ATP2A2 and mitochondrial F1-ATPase. Facilitates diastolic Ca(2+) dissociation and myofilament mechanics in order to improve relaxation during diastole. This Homo sapiens (Human) protein is Protein S100-A1 (S100A1).